We begin with the raw amino-acid sequence, 617 residues long: ATP-dependent rRNA helicase SPB4 (617 aa).

The Q motif signature appears at 7–35 (WADLDYELQPWIKKAINVSGFDSMTPVQA). In terms of domain architecture, Helicase ATP-binding spans 38–224 (IPMFAKNKDV…KTGLRNPVKI (187 aa)). 51 to 58 (SVTGSGKT) serves as a coordination point for ATP. The DEAD box motif lies at 172–175 (DEAD). Positions 252 to 406 (NLIHIMNNIR…ETDINKNKIS (155 aa)) constitute a Helicase C-terminal domain.

Belongs to the DEAD box helicase family. DDX55/SPB4 subfamily. In terms of assembly, component of pre-60S ribosomal complexes.

The protein localises to the nucleus. It is found in the nucleolus. The catalysed reaction is ATP + H2O = ADP + phosphate + H(+). In terms of biological role, ATP-binding RNA helicase involved in the biogenesis of 60S ribosomal subunits. Binds 90S pre-ribosomal particles and dissociates from pre-60S ribosomal particles after processing of 27SB pre-rRNA. Required for the normal formation of 18S rRNA through the processing of pre-rRNAs at sites A0, A1 and A2, and the normal formation of 25S and 5.8S rRNAs through the processing of pre-rRNAs at sites C1 and C2. The polypeptide is ATP-dependent rRNA helicase SPB4 (Candida glabrata (strain ATCC 2001 / BCRC 20586 / JCM 3761 / NBRC 0622 / NRRL Y-65 / CBS 138) (Yeast)).